Reading from the N-terminus, the 1253-residue chain is Myosin heavy chain 95F (1253 aa).

A Myosin N-terminal SH3-like domain is found at 3–54 (EDTQLVWVRDAAEGYIQGRITEIGAKEFEVTPTDRKYPKRTCHFDDIHSSCD). Residues 57-766 (QDHDDNCELM…KFVEFDRIMR (710 aa)) enclose the Myosin motor domain. Position 151-158 (151-158 (GESGAGKT)) interacts with ATP. Residues 647-666 (GELMEKLEQNGTNFIRCIKP) form an actin-binding region. One can recognise an IQ domain in the interval 808 to 837 (RNKCVLIAQRIARGFLARKQHRPRYQGIGK). Residues 900-1022 (ANMNKLTVDL…LRLANESNGQ (123 aa)) adopt a coiled-coil conformation. The hydrophobic region stretch occupies residues 1187-1193 (PILLVAG). The disordered stretch occupies residues 1233-1253 (AYKNLGAAKPNGPAAAMQKQQ).

The protein belongs to the TRAFAC class myosin-kinesin ATPase superfamily. Myosin family. Isoform B is present at a higher level in the head and gonads than in the thoraxes. Isoform 145 kDa is found only in the head. CLIP-190 and jar are coexpressed at several times in development and in a number of tissues, including embryonic axonal neuron processes and posterior pole.

The protein localises to the cytoplasm. It is found in the cytoskeleton. Functionally, myosin is a protein that binds to actin and has ATPase activity that is activated by actin. Together CLIP-190 and jar may coordinate the interaction between the actin and microtubule cytoskeleton. May link endocytic vesicles to microtubules and may be involved in transport in the early embryo and in the dynamic process of dorsal closure. It is believed that its function changes during the life cycle. The protein is Myosin heavy chain 95F (jar) of Drosophila melanogaster (Fruit fly).